A 455-amino-acid polypeptide reads, in one-letter code: MKIFRCCFKYTLQQKLFILLLTLWLFSLLKLLNVGRLLFPQRDIYLVEYSLSTSPFVRNRFPESGDAARDNVNCSGVYEHEPLEIGKSLEIRRRSIIDLEDGDVVAMTSDCDVYQTLRQYHEKLVSREEEDFPIAYSLVVHKDAIMVERLIRAIYNQHNLYCIHYDLKSPDTFKAAMNNLAKCFPNIFIASKLETVEYAHISRLQADWNCLSDLLKSSVQWKYVINLCGQDFPLKSNFELVTELKSLQGRNMLETVRPPSAKTERFTYHHELRQVPYDYMKLPVKTNVSKGAPPHNIQVFVGSAYFVLSRAFVKYIFNSSLVEDFFAWSKDTYSPDEHFWATLIRIPGIPGGISSSSQDVSDLQSKTRLVKWFYYEGFLYPNCTGSHLRSVCIYGAAELRWLLNEGHWFANKFDSKVDPILMKCLAEKLEEQQRKLIALSSEKFMTEGTRQSHTL.

Topologically, residues 1-13 (MKIFRCCFKYTLQ) are cytoplasmic. The helical; Signal-anchor for type II membrane protein transmembrane segment at 14–34 (QKLFILLLTLWLFSLLKLLNV) threads the bilayer. Residues 35–455 (GRLLFPQRDI…TEGTRQSHTL (421 aa)) are Lumenal-facing. Asparagine 73 carries N-linked (GlcNAc...) asparagine glycosylation. 4 disulfides stabilise this stretch: cysteine 74/cysteine 228, cysteine 162/cysteine 383, cysteine 183/cysteine 210, and cysteine 392/cysteine 424. N-linked (GlcNAc...) asparagine glycans are attached at residues asparagine 287 and asparagine 382.

This sequence belongs to the glycosyltransferase 14 family.

It localises to the golgi apparatus membrane. It carries out the reaction a 3-O-[beta-D-galactosyl-(1-&gt;3)-N-acetyl-alpha-D-galactosaminyl]-L-seryl-[protein] + UDP-N-acetyl-alpha-D-glucosamine = 3-O-{beta-D-galactosyl-(1-&gt;3)-[N-acetyl-beta-D-glucosaminyl-(1-&gt;6)]-N-acetyl-alpha-D-galactosaminyl}-L-seryl-[protein] + UDP + H(+). The enzyme catalyses a 3-O-[beta-D-galactosyl-(1-&gt;3)-N-acetyl-alpha-D-galactosaminyl]-L-threonyl-[protein] + UDP-N-acetyl-alpha-D-glucosamine = a 3-O-{beta-D-galactosyl-(1-&gt;3)-[N-acetyl-beta-D-glucosaminyl-(1-&gt;6)]-N-acetyl-alpha-D-galactosaminyl}-L-threonyl-[protein] + UDP + H(+). It participates in protein modification; protein glycosylation. Functionally, glycosyltransferase that mediates core 2 O-glycan branching, an important step in mucin-type biosynthesis. Does not have core 4 O-glycan or I-branching enzyme activity. This is Beta-1,3-galactosyl-O-glycosyl-glycoprotein beta-1,6-N-acetylglucosaminyltransferase 4 (Gcnt4) from Mus musculus (Mouse).